The sequence spans 117 residues: Ig heavy chain V region MOPC 47A (117 aa).

In terms of domain architecture, Ig-like spans 1-113 (EVKLVESGGG…FAYWGZGTLV (113 aa)).

The chain is Ig heavy chain V region MOPC 47A from Mus musculus (Mouse).